Consider the following 219-residue polypeptide: MSDVNSVLRKQLLNGAAQMGVAPGERQTEQLLAYIREFEKWNKAYNLSAVRDVTQMVARHLLDSLSVVPWIARSPYPLARMIDVGTGGGLPGIPLAIMFPEKTFTLLDSNGKKTRFLFHVKTLLGLDNVTVENRRVEEFAPAGLFQGVISRAFASLQDMTEGCAGLLAPGGIYLAMKGLFPEDELVPIAGKIRLVETVKLQVAETDGERHLLILQPQEP.

Residues Gly85, Leu90, 136 to 137 (VE), and Arg151 contribute to the S-adenosyl-L-methionine site.

The protein belongs to the methyltransferase superfamily. RNA methyltransferase RsmG family.

It localises to the cytoplasm. It catalyses the reaction guanosine(527) in 16S rRNA + S-adenosyl-L-methionine = N(7)-methylguanosine(527) in 16S rRNA + S-adenosyl-L-homocysteine. Functionally, specifically methylates the N7 position of guanine in position 527 of 16S rRNA. The polypeptide is Ribosomal RNA small subunit methyltransferase G (Cellvibrio japonicus (strain Ueda107) (Pseudomonas fluorescens subsp. cellulosa)).